A 335-amino-acid polypeptide reads, in one-letter code: uncharacterized protein (335 aa).

Solcar repeat units follow at residues 22-129 (VKPI…LLPL), 134-227 (GFPA…IRLF), and 244-327 (KDLY…TKKY). Helical transmembrane passes span 28–48 (MLSACVGSVITTLTVTPLDVV), 104–123 (GLVPSLTMLLPANTVQFLGY), 133–154 (WGFPAAAAIAGASARTISATIV), 195–219 (GILNLWSGVSVTLWRDVPFSAFYWW), 246–263 (LYINFVSGGISGTLATLL), and 307–323 (CVKVAPSCAIMISSYHL).

This sequence belongs to the mitochondrial carrier (TC 2.A.29) family.

It localises to the mitochondrion inner membrane. This is an uncharacterized protein from Schizosaccharomyces pombe (strain 972 / ATCC 24843) (Fission yeast).